We begin with the raw amino-acid sequence, 434 residues long: Tryptophan synthase beta chain (434 aa).

The residue at position 92 (Lys-92) is an N6-(pyridoxal phosphate)lysine. The segment at 411–434 (VKGGVATSPESFDASGAKGAGSQS) is disordered.

It belongs to the TrpB family. As to quaternary structure, tetramer of two alpha and two beta chains. Pyridoxal 5'-phosphate is required as a cofactor.

The catalysed reaction is (1S,2R)-1-C-(indol-3-yl)glycerol 3-phosphate + L-serine = D-glyceraldehyde 3-phosphate + L-tryptophan + H2O. Its pathway is amino-acid biosynthesis; L-tryptophan biosynthesis; L-tryptophan from chorismate: step 5/5. The beta subunit is responsible for the synthesis of L-tryptophan from indole and L-serine. The chain is Tryptophan synthase beta chain from Polaromonas naphthalenivorans (strain CJ2).